Here is an 860-residue protein sequence, read N- to C-terminus: Transforming growth factor-beta receptor-associated protein 1 (860 aa).

In terms of domain architecture, CNH spans 24–297 (HISIECVECC…HILQDFEGRV (274 aa)). The CHCR repeat unit spans residues 564–732 (RPLDEQQQTS…YLRAGPSAQD (169 aa)).

The protein belongs to the TRAP1 family. Interacts with TGFBR2 and ACVR2B; in the absence of ligand stimulation. Interacts with TGFBR1, ACVRL1, BMPR1A and ACVR1B; in the absence of ligand stimulation and to a less extent. Interacts with SMAD4; the interaction seems to be mutually exclusive with the interaction of SMAD4 and phosphorylated SMAD2. May interact with ALOX5. Interacts with RAB5C. Interacts with VPS8, VPS11 and VPS16. Component of the putative class C core vacuole/endosome tethering (CORVET) complex; the core of which composed of the class C Vps proteins VPS11, VPS16, VPS18 and VPS33A, is associated with VPS8 and TGFBRAP1.

It localises to the cytoplasm. The protein resides in the early endosome. Functionally, plays a role in the TGF-beta/activin signaling pathway. It associates with inactive heteromeric TGF-beta and activin receptor complexes, mainly through the type II receptor, and is released upon activation of signaling. May recruit SMAD4 to the vicinity of the receptor complex and facilitate its interaction with receptor-regulated Smads, such as SMAD2. Its function is as follows. Plays a role in vesicle-mediated protein trafficking of the endocytic membrane transport pathway. Believed to act as a component of the putative CORVET endosomal tethering complexes which is proposed to be involved in the Rab5-to-Rab7 endosome conversion probably implicating MON1A/B, and via binding SNAREs and SNARE complexes to mediate tethering and docking events during SNARE-mediated membrane fusion. The CORVET complex is proposed to function as a Rab5 effector to mediate early endosome fusion probably in specific endosome subpopulations. Functions predominantly in APPL1-containing endosomes and in degradative but not recycling trafficking of endocytosed cargo. This Mus musculus (Mouse) protein is Transforming growth factor-beta receptor-associated protein 1 (Tgfbrap1).